Reading from the N-terminus, the 177-residue chain is Cyclic pyranopterin monophosphate synthase (177 aa).

Residues 89–91 (LCH) and 125–126 (ME) contribute to the substrate site. The active site involves Asp-140.

Belongs to the MoaC family. Homohexamer; trimer of dimers.

The enzyme catalyses (8S)-3',8-cyclo-7,8-dihydroguanosine 5'-triphosphate = cyclic pyranopterin phosphate + diphosphate. It participates in cofactor biosynthesis; molybdopterin biosynthesis. Catalyzes the conversion of (8S)-3',8-cyclo-7,8-dihydroguanosine 5'-triphosphate to cyclic pyranopterin monophosphate (cPMP). This is Cyclic pyranopterin monophosphate synthase from Streptomyces griseus subsp. griseus (strain JCM 4626 / CBS 651.72 / NBRC 13350 / KCC S-0626 / ISP 5235).